Consider the following 601-residue polypeptide: Elongation factor 4 (601 aa).

The 183-residue stretch at 4 to 186 folds into the tr-type G domain; that stretch reads SFIRNFAIIA…SIVHLVPPPK (183 aa). Residues 16 to 21 and 133 to 136 each bind GTP; these read DHGKST and NKID.

This sequence belongs to the TRAFAC class translation factor GTPase superfamily. Classic translation factor GTPase family. LepA subfamily.

It localises to the cell inner membrane. The enzyme catalyses GTP + H2O = GDP + phosphate + H(+). Its function is as follows. Required for accurate and efficient protein synthesis under certain stress conditions. May act as a fidelity factor of the translation reaction, by catalyzing a one-codon backward translocation of tRNAs on improperly translocated ribosomes. Back-translocation proceeds from a post-translocation (POST) complex to a pre-translocation (PRE) complex, thus giving elongation factor G a second chance to translocate the tRNAs correctly. Binds to ribosomes in a GTP-dependent manner. This is Elongation factor 4 from Koribacter versatilis (strain Ellin345).